Here is a 611-residue protein sequence, read N- to C-terminus: Chaperone protein DnaK (611 aa).

Residue T173 is modified to Phosphothreonine; by autocatalysis. Low complexity predominate over residues 579–592 (AAGQAEGAQGAQDA). The disordered stretch occupies residues 579–598 (AAGQAEGAQGAQDAGAKKDN).

Belongs to the heat shock protein 70 family.

Functionally, acts as a chaperone. The protein is Chaperone protein DnaK of Bacillus cereus (strain B4264).